Reading from the N-terminus, the 382-residue chain is Lipoyl synthase, mitochondrial (382 aa).

Residues 1 to 30 constitute a mitochondrion transit peptide; it reads MHGRRHLAASLARALTYAPSRSISSTPSLL. Positions 25-34 are enriched in polar residues; the sequence is STPSLLQTLD. Residues 25-47 form a disordered region; that stretch reads STPSLLQTLDPSTPSPAAAPPTA. Cysteine 112, cysteine 117, cysteine 123, cysteine 143, cysteine 147, cysteine 150, and serine 359 together coordinate [4Fe-4S] cluster. Positions 128–348 constitute a Radical SAM core domain; that stretch reads ETGTATATIM…RSLGVDMGFR (221 aa).

The protein belongs to the radical SAM superfamily. Lipoyl synthase family. The cofactor is [4Fe-4S] cluster.

The protein resides in the mitochondrion. The enzyme catalyses [[Fe-S] cluster scaffold protein carrying a second [4Fe-4S](2+) cluster] + N(6)-octanoyl-L-lysyl-[protein] + 2 oxidized [2Fe-2S]-[ferredoxin] + 2 S-adenosyl-L-methionine + 4 H(+) = [[Fe-S] cluster scaffold protein] + N(6)-[(R)-dihydrolipoyl]-L-lysyl-[protein] + 4 Fe(3+) + 2 hydrogen sulfide + 2 5'-deoxyadenosine + 2 L-methionine + 2 reduced [2Fe-2S]-[ferredoxin]. Its pathway is protein modification; protein lipoylation via endogenous pathway; protein N(6)-(lipoyl)lysine from octanoyl-[acyl-carrier-protein]: step 2/2. Its function is as follows. Catalyzes the radical-mediated insertion of two sulfur atoms into the C-6 and C-8 positions of the octanoyl moiety bound to the lipoyl domains of lipoate-dependent enzymes, thereby converting the octanoylated domains into lipoylated derivatives. In Oryza sativa subsp. indica (Rice), this protein is Lipoyl synthase, mitochondrial.